The sequence spans 1064 residues: Carbamoyl phosphate synthase large chain (1064 aa).

Residues 1–401 are carboxyphosphate synthetic domain; sequence MPKRNDIKKI…SLLKAVRSLE (401 aa). ATP contacts are provided by R129, R169, G175, G176, E208, I210, E215, G241, V242, H243, Q284, and E298. The 195-residue stretch at 133 to 327 folds into the ATP-grasp 1 domain; sequence KELCESINEP…IAKMSAKIAI (195 aa). Q284, E298, and N300 together coordinate Mg(2+). Residues Q284, E298, and N300 each coordinate Mn(2+). The interval 402-546 is oligomerization domain; that stretch reads IGVFHNEMTE…YSTYEWENES (145 aa). A carbamoyl phosphate synthetic domain region spans residues 547-929; that stretch reads KRSDKEKIIV…ALYKSFEAAK (383 aa). The ATP-grasp 2 domain maps to 671–861; it reads EKALQDLDIP…MAQLATQMIL (191 aa). ATP is bound by residues R707, S746, L748, E752, G777, V778, H779, S780, Q820, and E832. Mg(2+) is bound by residues Q820, E832, and N834. The Mn(2+) site is built by Q820, E832, and N834. One can recognise an MGS-like domain in the interval 930-1064; it reads LHMADYGSVL…QSRSFTTKNI (135 aa). The segment at 930-1064 is allosteric domain; sequence LHMADYGSVL…QSRSFTTKNI (135 aa).

This sequence belongs to the CarB family. In terms of assembly, composed of two chains; the small (or glutamine) chain promotes the hydrolysis of glutamine to ammonia, which is used by the large (or ammonia) chain to synthesize carbamoyl phosphate. Tetramer of heterodimers (alpha,beta)4. The cofactor is Mg(2+). Mn(2+) is required as a cofactor.

The enzyme catalyses hydrogencarbonate + L-glutamine + 2 ATP + H2O = carbamoyl phosphate + L-glutamate + 2 ADP + phosphate + 2 H(+). It catalyses the reaction hydrogencarbonate + NH4(+) + 2 ATP = carbamoyl phosphate + 2 ADP + phosphate + 2 H(+). The protein operates within amino-acid biosynthesis; L-arginine biosynthesis; carbamoyl phosphate from bicarbonate: step 1/1. Its pathway is pyrimidine metabolism; UMP biosynthesis via de novo pathway; (S)-dihydroorotate from bicarbonate: step 1/3. Large subunit of the glutamine-dependent carbamoyl phosphate synthetase (CPSase). CPSase catalyzes the formation of carbamoyl phosphate from the ammonia moiety of glutamine, carbonate, and phosphate donated by ATP, constituting the first step of 2 biosynthetic pathways, one leading to arginine and/or urea and the other to pyrimidine nucleotides. The large subunit (synthetase) binds the substrates ammonia (free or transferred from glutamine from the small subunit), hydrogencarbonate and ATP and carries out an ATP-coupled ligase reaction, activating hydrogencarbonate by forming carboxy phosphate which reacts with ammonia to form carbamoyl phosphate. The protein is Carbamoyl phosphate synthase large chain of Lactococcus lactis subsp. cremoris (strain MG1363).